We begin with the raw amino-acid sequence, 449 residues long: Na(+)-translocating NADH-quinone reductase subunit A (449 aa).

Belongs to the NqrA family. In terms of assembly, composed of six subunits; NqrA, NqrB, NqrC, NqrD, NqrE and NqrF.

The catalysed reaction is a ubiquinone + n Na(+)(in) + NADH + H(+) = a ubiquinol + n Na(+)(out) + NAD(+). NQR complex catalyzes the reduction of ubiquinone-1 to ubiquinol by two successive reactions, coupled with the transport of Na(+) ions from the cytoplasm to the periplasm. NqrA to NqrE are probably involved in the second step, the conversion of ubisemiquinone to ubiquinol. This Actinobacillus pleuropneumoniae serotype 5b (strain L20) protein is Na(+)-translocating NADH-quinone reductase subunit A.